The following is a 341-amino-acid chain: UDP-glucuronic acid decarboxylase 5 (341 aa).

Residues Met1–Asn21 form a disordered region. Asp60–Asp85 serves as a coordination point for NAD(+). Residue Arg169 participates in substrate binding. Tyr172 functions as the Proton acceptor in the catalytic mechanism. Tyr172–Lys176 is a binding site for NAD(+). Residue Asn201 participates in substrate binding. NAD(+) is bound at residue Arg213. Residues Val214 to Phe218, Gln231 to Arg238, and Asp298 to Arg302 contribute to the substrate site.

Belongs to the NAD(P)-dependent epimerase/dehydratase family. UDP-glucuronic acid decarboxylase subfamily. The cofactor is NAD(+).

It is found in the cytoplasm. The catalysed reaction is UDP-alpha-D-glucuronate + H(+) = UDP-alpha-D-xylose + CO2. Its pathway is nucleotide-sugar biosynthesis; UDP-alpha-D-xylose biosynthesis; UDP-alpha-D-xylose from UDP-alpha-D-glucuronate: step 1/1. Its function is as follows. Catalyzes the NAD-dependent decarboxylation of UDP-glucuronic acid to UDP-xylose. Necessary for the biosynthesis of the core tetrasaccharide in glycosaminoglycan biosynthesis. The polypeptide is UDP-glucuronic acid decarboxylase 5 (UXS5) (Arabidopsis thaliana (Mouse-ear cress)).